A 60-amino-acid polypeptide reads, in one-letter code: Putative transmembrane protein 74 (60 aa).

2 helical membrane passes run 4–24 (FSVI…FLTF) and 35–55 (WVYI…YQAG).

The protein localises to the host membrane. This Sulfolobus islandicus filamentous virus (isolate Iceland/Hveragerdi) (SIFV) protein is Putative transmembrane protein 74 (SIFV0074).